The chain runs to 510 residues: Probable cytochrome P450 312a1 (510 aa).

Cys455 is a binding site for heme.

This sequence belongs to the cytochrome P450 family. It depends on heme as a cofactor.

The protein resides in the endoplasmic reticulum membrane. Its subcellular location is the microsome membrane. In terms of biological role, may be involved in the metabolism of insect hormones and in the breakdown of synthetic insecticides. This chain is Probable cytochrome P450 312a1 (Cyp312a1), found in Drosophila melanogaster (Fruit fly).